The primary structure comprises 117 residues: Large ribosomal subunit protein bL20 (117 aa).

Belongs to the bacterial ribosomal protein bL20 family.

In terms of biological role, binds directly to 23S ribosomal RNA and is necessary for the in vitro assembly process of the 50S ribosomal subunit. It is not involved in the protein synthesizing functions of that subunit. The polypeptide is Large ribosomal subunit protein bL20 (Geotalea daltonii (strain DSM 22248 / JCM 15807 / FRC-32) (Geobacter daltonii)).